Consider the following 1049-residue polypeptide: Vacuolar membrane protease (1049 aa).

Residues 1 to 11 (MKCYNPSAFVP) lie on the Cytoplasmic side of the membrane. Residues 12–32 (MAVTLVTVIIYLGVFIPLLII) form a helical membrane-spanning segment. Residues 33-438 (QETVPSAPDD…TVFAVFKLRT (406 aa)) are Vacuolar-facing. The N-linked (GlcNAc...) asparagine glycan is linked to Asn-50. Residues 114-135 (DAEAPESVPSPSNSNDGSAERY) are disordered. The N-linked (GlcNAc...) asparagine glycan is linked to Asn-157. Zn(2+)-binding residues include His-221 and Asp-233. The active-site Proton acceptor is the Glu-267. Zn(2+) is bound by residues Glu-268, Glu-293, and His-365. The helical transmembrane segment at 439-459 (LFAWSLTLLIAAPLMLFAVSY) threads the bilayer. Residues 460-495 (LLNRQDKFYFFAGSIKAKGPEDEPISLGGWRGAFRY) lie on the Cytoplasmic side of the membrane. A helical transmembrane segment spans residues 496-516 (PITLIITCAITFGCASLINKI). At 517–526 (NPMIVYSSPY) the chain is on the vacuolar side. A helical membrane pass occupies residues 527–547 (SVWSMSASLFFSIFWFIMAGC). The Cytoplasmic segment spans residues 548–557 (NFVRPSALQR). A helical transmembrane segment spans residues 558–578 (GYAFMWLFVFGWIILVAATVY). Residues 579 to 585 (EDRFKIS) are Vacuolar-facing. Residues 586-606 (GGYLFVFYEAAIFLATLIAIG) form a helical membrane-spanning segment. Residues 607–740 (EQFALPKKST…LPIWTWLVQY (134 aa)) lie on the Cytoplasmic side of the membrane. The interval 621-686 (SQLDHDGNQD…IGGGAPTQRS (66 aa)) is disordered. The segment covering 622–633 (QLDHDGNQDSHH) has biased composition (basic and acidic residues). Acidic residues predominate over residues 655-664 (GQEEDPEDNV). Residues 741–761 (LLVGPFILIVVGQVGLFLVAA) traverse the membrane as a helical segment. Topologically, residues 762–773 (LHQTGTDGSPLL) are vacuolar. A helical transmembrane segment spans residues 774 to 794 (LPYLVVAVFSILLLLPVTPFI). Residues 795–801 (HRLTHHM) are Cytoplasmic-facing. The chain crosses the membrane as a helical span at residues 802–822 (PTFFFLVFIGTLIYNLVAFPF). The Vacuolar segment spans residues 823 to 1049 (SPNNRYKAYF…LVEGSKRFVV (227 aa)). The N-linked (GlcNAc...) asparagine glycan is linked to Asn-914.

It belongs to the peptidase M28 family. The cofactor is Zn(2+).

The protein localises to the vacuole membrane. May be involved in vacuolar sorting and osmoregulation. The protein is Vacuolar membrane protease of Botryotinia fuckeliana (strain B05.10) (Noble rot fungus).